Reading from the N-terminus, the 85-residue chain is CDC42 small effector protein homolog (85 aa).

Residues Cys14 and Cys15 are each lipidated (S-palmitoyl cysteine). The CRIB domain occupies 37–50 (IGNPTNFVHTGHIG). Phosphoserine is present on residues Ser78 and Ser81.

It belongs to the CDC42SE/SPEC family.

It localises to the cytoplasm. Its subcellular location is the cytoskeleton. The protein localises to the cell membrane. In terms of biological role, probably involved in the organization of the actin cytoskeleton by acting downstream of CDC42, inducing actin filament assembly. In Drosophila melanogaster (Fruit fly), this protein is CDC42 small effector protein homolog (Spec2).